We begin with the raw amino-acid sequence, 158 residues long: 2-C-methyl-D-erythritol 2,4-cyclodiphosphate synthase (158 aa).

A divalent metal cation-binding residues include aspartate 9 and histidine 11. Residues aspartate 9 to histidine 11 and histidine 35 to serine 36 contribute to the 4-CDP-2-C-methyl-D-erythritol 2-phosphate site. Histidine 43 is an a divalent metal cation binding site. Residues aspartate 57–glycine 59, phenylalanine 62–aspartate 66, alanine 101–alanine 107, threonine 133–glutamate 136, phenylalanine 140, and arginine 143 each bind 4-CDP-2-C-methyl-D-erythritol 2-phosphate.

It belongs to the IspF family. As to quaternary structure, homotrimer. Requires a divalent metal cation as cofactor.

It carries out the reaction 4-CDP-2-C-methyl-D-erythritol 2-phosphate = 2-C-methyl-D-erythritol 2,4-cyclic diphosphate + CMP. It functions in the pathway isoprenoid biosynthesis; isopentenyl diphosphate biosynthesis via DXP pathway; isopentenyl diphosphate from 1-deoxy-D-xylulose 5-phosphate: step 4/6. Involved in the biosynthesis of isopentenyl diphosphate (IPP) and dimethylallyl diphosphate (DMAPP), two major building blocks of isoprenoid compounds. Catalyzes the conversion of 4-diphosphocytidyl-2-C-methyl-D-erythritol 2-phosphate (CDP-ME2P) to 2-C-methyl-D-erythritol 2,4-cyclodiphosphate (ME-CPP) with a corresponding release of cytidine 5-monophosphate (CMP). In Bacillus velezensis (strain DSM 23117 / BGSC 10A6 / LMG 26770 / FZB42) (Bacillus amyloliquefaciens subsp. plantarum), this protein is 2-C-methyl-D-erythritol 2,4-cyclodiphosphate synthase.